We begin with the raw amino-acid sequence, 335 residues long: MAAFADRPTCRVSLGAVFLARELHRLRKSLPLCVFSLFLFSFAFSALSGAPSQFAEAAMPKLSGEKLAELMQMDVKDIKERMLALFDLIDTNQDNTIDTEEAKEWSAKLKNAMHQHQVRMEFQAIDKDNDGKVSLSELEATYVDSLDQKQLEQHKKEVEQRFKTVDKDNDGLLDLSEIRILMDPGKDEGLMKIEIEEILNAQDKNGDRKITVTEFIETEGTGSLNDVEKTELEKEFKSYDLNADGAIDVEELQQIIKDPHSHEIRMLLEEFTKDLKDGKVGREQWEKEFESFAVSMLTDNGEVLRFPEDYSGIEFPFKTAVPQVDVDDEDKHDEL.

The helical transmembrane segment at 30–50 threads the bilayer; that stretch reads LPLCVFSLFLFSFAFSALSGA. EF-hand domains are found at residues 113-148, 153-188, 190-225, and 227-262; these read MHQH…SLDQ, QHKK…GKDE, LMKI…GSLN, and VEKT…PHSH. 18 residues coordinate Ca(2+): Asp-126, Asp-128, Asp-130, Lys-132, Glu-137, Asp-166, Asp-168, Asp-170, Glu-177, Asp-203, Asn-205, Asp-207, Lys-209, Glu-214, Asp-240, Asn-242, Asp-244, and Glu-251. The Prevents secretion from ER signature appears at 332–335; the sequence is HDEL.

Its subcellular location is the endoplasmic reticulum membrane. It is found in the cytoplasm. The protein resides in the cytosol. Functionally, calcium-binding protein. Participates in the efflux of intracellular Ca(2+) and storage of Ca(2+) in the endoplasmic reticulum. Required for gliding, host cell invasion and egress. Required for microneme secretion. The polypeptide is Calcium-binding protein TgpCaBP (Toxoplasma gondii).